Reading from the N-terminus, the 461-residue chain is Argininosuccinate lyase (461 aa).

The protein belongs to the lyase 1 family. Argininosuccinate lyase subfamily.

The protein localises to the cytoplasm. It catalyses the reaction 2-(N(omega)-L-arginino)succinate = fumarate + L-arginine. Its pathway is amino-acid biosynthesis; L-arginine biosynthesis; L-arginine from L-ornithine and carbamoyl phosphate: step 3/3. This Aeromonas salmonicida (strain A449) protein is Argininosuccinate lyase.